A 440-amino-acid chain; its full sequence is Glutamyl-tRNA reductase (440 aa).

Residues 40 to 43, Ser-100, 105 to 107, and Gln-111 contribute to the substrate site; these read TCNR and ERE. The active-site Nucleophile is Cys-41. 181–186 contributes to the NADP(+) binding site; that stretch reads GTGAYA.

This sequence belongs to the glutamyl-tRNA reductase family. In terms of assembly, homodimer.

It carries out the reaction (S)-4-amino-5-oxopentanoate + tRNA(Glu) + NADP(+) = L-glutamyl-tRNA(Glu) + NADPH + H(+). It participates in porphyrin-containing compound metabolism; protoporphyrin-IX biosynthesis; 5-aminolevulinate from L-glutamyl-tRNA(Glu): step 1/2. Catalyzes the NADPH-dependent reduction of glutamyl-tRNA(Glu) to glutamate 1-semialdehyde (GSA). The chain is Glutamyl-tRNA reductase from Renibacterium salmoninarum (strain ATCC 33209 / DSM 20767 / JCM 11484 / NBRC 15589 / NCIMB 2235).